We begin with the raw amino-acid sequence, 519 residues long: uncharacterized protein (519 aa).

Helical transmembrane passes span 52 to 72 (IYFL…VRGS), 86 to 106 (LATY…SPIV), 119 to 139 (TWVV…SYNV), 156 to 176 (WSFL…GWSL), 199 to 219 (FFLS…NTFI), 231 to 251 (LSGY…LVCF), 313 to 333 (MLSL…VYTG), 343 to 363 (IWLK…ILVY), 374 to 394 (VFFP…IQFV), 408 to 430 (IGGT…PQYV), and 477 to 497 (TSIV…TPVV).

The protein resides in the membrane. This is an uncharacterized protein from Schizosaccharomyces pombe (strain 972 / ATCC 24843) (Fission yeast).